The chain runs to 172 residues: C-phycocyanin-2 beta subunit (172 aa).

Asn-72 bears the N4-methylasparagine mark. (2R,3E)-phycocyanobilin contacts are provided by Cys-82 and Cys-153.

This sequence belongs to the phycobiliprotein family. In terms of assembly, heterodimer of an alpha and a beta subunit, which further assembles into trimers and the trimers into hexamers. Contains two covalently linked bilin chromophores.

The protein localises to the cellular thylakoid membrane. Light-harvesting photosynthetic bile pigment-protein from the phycobiliprotein complex (phycobilisome, PBS). Phycocyanin is the major phycobiliprotein in the PBS rod. This chain is C-phycocyanin-2 beta subunit (cpcB2), found in Microchaete diplosiphon (Fremyella diplosiphon).